Reading from the N-terminus, the 121-residue chain is uncharacterized protein (121 aa).

A disordered region spans residues 85–111 (NANNDDYESPYKTPKIKSNPSLDSSGS). The segment covering 100 to 111 (IKSNPSLDSSGS) has biased composition (polar residues).

This is an uncharacterized protein from Dictyostelium discoideum (Social amoeba).